The chain runs to 204 residues: MSTTTTVSAIRTVEEMSNITISSHPVVNEQIAILRDRSLKPSQVRSVVDEISRFLAYESTKTLKSPSVSIVPVLRSGMSMMSAFSKVLPDVPIYHIGIFREKSTLQPIEYYNKLPKKSTDTAVILDPVMATGGTANAVITTLQEWGCKNIIFVSVLASEQALTRFSNIPGVEFVIGAVDKSLDAKGYLVPGVGDIGDRLYGATA.

5-phospho-alpha-D-ribose 1-diphosphate contacts are provided by residues R75, R100, and D126–T134. Y187 contributes to the D-ribose 5-phosphate binding site. Uracil-binding positions include L188 and G193–I195. A 5-phospho-alpha-D-ribose 1-diphosphate-binding site is contributed by D194.

Belongs to the UPRTase family. Mg(2+) serves as cofactor.

Its subcellular location is the cytoplasm. The protein localises to the nucleus. It carries out the reaction UMP + diphosphate = 5-phospho-alpha-D-ribose 1-diphosphate + uracil. It functions in the pathway pyrimidine metabolism; UMP biosynthesis via salvage pathway; UMP from uracil: step 1/1. Allosterically activated by GTP. In terms of biological role, catalyzes the conversion of uracil and 5-phospho-alpha-D-ribose 1-diphosphate (PRPP) to UMP and diphosphate. In Schizosaccharomyces pombe (strain 972 / ATCC 24843) (Fission yeast), this protein is Putative uracil phosphoribosyltransferase urg2.